The following is a 231-amino-acid chain: Ribose-5-phosphate isomerase A (231 aa).

Substrate-binding positions include 40–43, 93–96, and 106–109; these read TGST, DGAD, and KGGG. The active-site Proton acceptor is glutamate 115. Lysine 133 provides a ligand contact to substrate.

This sequence belongs to the ribose 5-phosphate isomerase family. As to quaternary structure, homodimer.

It catalyses the reaction aldehydo-D-ribose 5-phosphate = D-ribulose 5-phosphate. It functions in the pathway carbohydrate degradation; pentose phosphate pathway; D-ribose 5-phosphate from D-ribulose 5-phosphate (non-oxidative stage): step 1/1. Its function is as follows. Catalyzes the reversible conversion of ribose-5-phosphate to ribulose 5-phosphate. The protein is Ribose-5-phosphate isomerase A of Escherichia coli O6:K15:H31 (strain 536 / UPEC).